The chain runs to 172 residues: Adenine phosphoribosyltransferase (172 aa).

Belongs to the purine/pyrimidine phosphoribosyltransferase family. In terms of assembly, homodimer.

Its subcellular location is the cytoplasm. It catalyses the reaction AMP + diphosphate = 5-phospho-alpha-D-ribose 1-diphosphate + adenine. The protein operates within purine metabolism; AMP biosynthesis via salvage pathway; AMP from adenine: step 1/1. In terms of biological role, catalyzes a salvage reaction resulting in the formation of AMP, that is energically less costly than de novo synthesis. The protein is Adenine phosphoribosyltransferase of Desulforamulus reducens (strain ATCC BAA-1160 / DSM 100696 / MI-1) (Desulfotomaculum reducens).